Consider the following 602-residue polypeptide: Probable pectinesterase/pectinesterase inhibitor 64 (602 aa).

Residues 36–56 (ILIIIAASCILLLLISLLIYA) traverse the membrane as a helical segment. The segment at 62–91 (SRNHHNPSHQTPTSDDHPPPETPPSPPPIA) is disordered. Residues 81–90 (PETPPSPPPI) are compositionally biased toward pro residues. The pectinesterase inhibitor 64 stretch occupies residues 87-237 (PPPIAQIRLA…VNLTGNALSM (151 aa)). 5 N-linked (GlcNAc...) asparagine glycosylation sites follow: N98, N156, N212, N229, and N315. A pectinesterase 64 region spans residues 288 to 595 (DVTVCKNGGK…YSVANFIQAD (308 aa)). T367 and Q397 together coordinate substrate. Catalysis depends on D420, which acts as the Proton donor; for pectinesterase activity. An intrachain disulfide couples C434 to C454. The Nucleophile; for pectinesterase activity role is filled by D441. N492 and N496 each carry an N-linked (GlcNAc...) asparagine glycan. Residues R518 and W520 each contribute to the substrate site.

The protein in the N-terminal section; belongs to the PMEI family. This sequence in the C-terminal section; belongs to the pectinesterase family. As to expression, expressed in siliques.

Its subcellular location is the membrane. It catalyses the reaction [(1-&gt;4)-alpha-D-galacturonosyl methyl ester](n) + n H2O = [(1-&gt;4)-alpha-D-galacturonosyl](n) + n methanol + n H(+). The protein operates within glycan metabolism; pectin degradation; 2-dehydro-3-deoxy-D-gluconate from pectin: step 1/5. In terms of biological role, acts in the modification of cell walls via demethylesterification of cell wall pectin. This chain is Probable pectinesterase/pectinesterase inhibitor 64 (PME64), found in Arabidopsis thaliana (Mouse-ear cress).